A 440-amino-acid polypeptide reads, in one-letter code: GTPase Der (440 aa).

EngA-type G domains follow at residues 3 to 167 (PIIA…PYDR) and 176 to 351 (TRIA…EQYC). GTP is bound by residues 9–16 (GRPNVGKS), 56–60 (DTGGF), 119–122 (NKVD), 182–189 (GRPNVGKS), 229–233 (DTAGI), and 294–297 (NKWD). Positions 352–436 (KRVTTGELNR…PLKLIFRGRD (85 aa)) constitute a KH-like domain.

The protein belongs to the TRAFAC class TrmE-Era-EngA-EngB-Septin-like GTPase superfamily. EngA (Der) GTPase family. In terms of assembly, associates with the 50S ribosomal subunit.

Its function is as follows. GTPase that plays an essential role in the late steps of ribosome biogenesis. The polypeptide is GTPase Der (Citrifermentans bemidjiense (strain ATCC BAA-1014 / DSM 16622 / JCM 12645 / Bem) (Geobacter bemidjiensis)).